The sequence spans 460 residues: Metal cation symporter ZIP8 (460 aa).

The first 22 residues, Met1–Ala22, serve as a signal peptide directing secretion. At Glu23–Gly132 the chain is on the extracellular side. 2 N-linked (GlcNAc...) asparagine glycosylation sites follow: Asn40 and Asn88. Residues Phe133–Ile153 form a helical membrane-spanning segment. The Cytoplasmic portion of the chain corresponds to Lys154–Lys160. Residues Ile161–Leu181 traverse the membrane as a helical segment. Topologically, residues Ile182–Lys191 are extracellular. A helical membrane pass occupies residues Val192–Phe212. The Cytoplasmic portion of the chain corresponds to Glu213–Ala365. The XEXPHE-motif motif lies at Glu343–Glu348. Residues Leu366 to Val386 traverse the membrane as a helical segment. Residues Gly387–Asn388 lie on the Extracellular side of the membrane. Residues Asn389–Ala409 form a helical membrane-spanning segment. Residues Asp410 to Asp429 lie on the Cytoplasmic side of the membrane. Residues Phe430 to Ile450 form a helical membrane-spanning segment. Topologically, residues Thr451 to Glu460 are extracellular.

The protein belongs to the ZIP transporter (TC 2.A.5) family. As to quaternary structure, homodimer. Post-translationally, N-glycosylated. N-glycosylation is not required for proper iron and zinc transport. As to expression, ubiquitously expressed. Expressed in thymus, placenta, lung, liver, pancreas, salivary gland and, to a lower extent, in spleen, testis, ovary, small intestine, colon, leukocyte, heart. Highest expression is observed in pancreas. Expressed by macrophages (at protein level). Expressed by microvascular capillary endothelial cells that constitute the blood-brain barrier (at protein level).

Its subcellular location is the cell membrane. The protein resides in the lysosome membrane. It localises to the apical cell membrane. It is found in the basolateral cell membrane. The enzyme catalyses Zn(2+)(out) + 2 hydrogencarbonate(out) = Zn(2+)(in) + 2 hydrogencarbonate(in). It carries out the reaction selenite(out) + Zn(2+)(out) + hydrogencarbonate(out) = selenite(in) + Zn(2+)(in) + hydrogencarbonate(in). It catalyses the reaction Mn(2+)(out) + 2 hydrogencarbonate(out) = Mn(2+)(in) + 2 hydrogencarbonate(in). The catalysed reaction is Fe(2+)(out) + 2 hydrogencarbonate(out) = Fe(2+)(in) + 2 hydrogencarbonate(in). The enzyme catalyses Cd(2+)(out) + 2 hydrogencarbonate(out) = Cd(2+)(in) + 2 hydrogencarbonate(in). It carries out the reaction Co(2+)(out) + 2 hydrogencarbonate(out) = Co(2+)(in) + 2 hydrogencarbonate(in). In terms of biological role, electroneutral divalent metal cation:bicarbonate symporter of the plasma membrane mediating the cellular uptake of zinc and manganese, two divalent metal cations important for development, tissue homeostasis and immunity. Transports an electroneutral complex composed of a divalent metal cation and two bicarbonate anions or alternatively a bicarbonate and a selenite anion. Thereby, it also contributes to the cellular uptake of selenium, an essential trace metal and micronutrient. Also imports cadmium a non-essential metal which is cytotoxic and carcinogenic. May also transport iron and cobalt through membranes. Through zinc import, indirectly regulates the metal-dependent transcription factor MTF1 and the expression of some metalloproteases involved in cartilage catabolism and also probably heart development. Also indirectly regulates the expression of proteins involved in cell morphology and cytoskeleton organization. Indirectly controls innate immune function and inflammatory response by regulating zinc cellular uptake which in turn modulates the expression of genes specific of these processes. Protects, for instance, cells from injury and death at the onset of inflammation. By regulating zinc influx into monocytes also directly modulates their adhesion to endothelial cells and arteries. Reclaims manganese from the bile at the apical membrane of hepatocytes, thereby regulating the activity of the manganese-dependent enzymes through the systemic levels of the nutrient. Also participates in manganese reabsorption in the proximal tubule of the kidney. By mediating the extracellular uptake of manganese by cells of the blood-brain barrier, may also play a role in the transport of the micronutrient to the brain. With manganese cellular uptake also participates in mitochondrial proper function. Finally, also probably functions intracellularly, translocating zinc from lysosome to cytosol to indirectly enhance the expression of specific genes during TCR-mediated T cell activation. The polypeptide is Metal cation symporter ZIP8 (Homo sapiens (Human)).